The following is a 232-amino-acid chain: 5'-methylthioadenosine/S-adenosylhomocysteine nucleosidase (232 aa).

The Proton acceptor role is filled by Glu-12. Substrate contacts are provided by residues Gly-78, Ile-152, and 173–174 (ME). Catalysis depends on Asp-197, which acts as the Proton donor.

This sequence belongs to the PNP/UDP phosphorylase family. MtnN subfamily. In terms of assembly, homodimer.

It catalyses the reaction S-adenosyl-L-homocysteine + H2O = S-(5-deoxy-D-ribos-5-yl)-L-homocysteine + adenine. The catalysed reaction is S-methyl-5'-thioadenosine + H2O = 5-(methylsulfanyl)-D-ribose + adenine. The enzyme catalyses 5'-deoxyadenosine + H2O = 5-deoxy-D-ribose + adenine. Its pathway is amino-acid biosynthesis; L-methionine biosynthesis via salvage pathway; S-methyl-5-thio-alpha-D-ribose 1-phosphate from S-methyl-5'-thioadenosine (hydrolase route): step 1/2. In terms of biological role, catalyzes the irreversible cleavage of the glycosidic bond in both 5'-methylthioadenosine (MTA) and S-adenosylhomocysteine (SAH/AdoHcy) to adenine and the corresponding thioribose, 5'-methylthioribose and S-ribosylhomocysteine, respectively. Also cleaves 5'-deoxyadenosine, a toxic by-product of radical S-adenosylmethionine (SAM) enzymes, into 5-deoxyribose and adenine. Thus, is required for in vivo function of the radical SAM enzymes biotin synthase and lipoic acid synthase, that are inhibited by 5'-deoxyadenosine accumulation. In Salmonella paratyphi A (strain ATCC 9150 / SARB42), this protein is 5'-methylthioadenosine/S-adenosylhomocysteine nucleosidase.